The chain runs to 322 residues: SUMO-activating enzyme subunit 1A (322 aa).

An N-acetylmethionine modification is found at M1.

Belongs to the ubiquitin-activating E1 family. As to quaternary structure, heterodimer of SAE1A or SAE1B and SAE2. The complex binds SUMO proteins via SAE2.

It localises to the nucleus. The protein operates within protein modification; protein sumoylation. Functionally, the dimeric enzyme acts as an E1 ligase for SUMO1 and SUMO2. It mediates ATP-dependent activation of SUMO proteins and formation of a thioester with a conserved cysteine residue on SAE2. Functionally redundant with its paralog SAE1B. In Arabidopsis thaliana (Mouse-ear cress), this protein is SUMO-activating enzyme subunit 1A (SAE1A).